The primary structure comprises 318 residues: L-lactate dehydrogenase (318 aa).

Residues Val-15, Asp-36, and Lys-41 each contribute to the NAD(+) site. Arg-89 is a binding site for substrate. Residues Ser-102, 119–121 (ITN), and Thr-144 contribute to the NAD(+) site. 121-124 (NPVD) serves as a coordination point for substrate. Residue 149–152 (DSAR) participates in substrate binding. His-176 acts as the Proton acceptor in catalysis. Residue Thr-231 participates in substrate binding.

The protein belongs to the LDH/MDH superfamily. LDH family. In terms of assembly, homotetramer.

It localises to the cytoplasm. The catalysed reaction is (S)-lactate + NAD(+) = pyruvate + NADH + H(+). The protein operates within fermentation; pyruvate fermentation to lactate; (S)-lactate from pyruvate: step 1/1. Its function is as follows. Catalyzes the conversion of lactate to pyruvate. The chain is L-lactate dehydrogenase from Fusobacterium nucleatum subsp. nucleatum (strain ATCC 25586 / DSM 15643 / BCRC 10681 / CIP 101130 / JCM 8532 / KCTC 2640 / LMG 13131 / VPI 4355).